The following is a 249-amino-acid chain: Salivary antigen-5 (249 aa).

The signal sequence occupies residues Met-1 to Ala-26. Residues Ser-50 to Tyr-193 form the SCP domain. N-linked (GlcNAc...) asparagine glycosylation is found at Asn-57, Asn-127, and Asn-168.

It belongs to the CRISP family. Venom allergen 5-like subfamily. In terms of assembly, monomeric in solution. Requires Cu(2+) as cofactor. In terms of tissue distribution, saliva (at protein level). Salivary gland (at protein level).

It localises to the secreted. Functionally, antioxidant protein that scavenges superoxide radicals. Removes superoxide radicals produced by PMA-stimulated host neutrophils. Inhibits host platelet aggregation induced by low doses of collagen by interfering with the pro-aggregatory properties of reactive oxygen species on platelets. Binds to heparin and sulfated glycosaminoglycans. This chain is Salivary antigen-5, found in Dipetalogaster maximus (Blood-sucking bug).